A 396-amino-acid chain; its full sequence is Elongation factor Tu (396 aa).

The 196-residue stretch at 10 to 205 (KPHVNIGTIG…AVDESIPDPV (196 aa)) folds into the tr-type G domain. The interval 19–26 (GHVDHGKT) is G1. Position 19–26 (19–26 (GHVDHGKT)) interacts with GTP. Thr26 is a Mg(2+) binding site. Positions 62 to 66 (GITIN) are G2. Positions 83–86 (DAPG) are G3. Residues 83–87 (DAPGH) and 138–141 (NKAD) each bind GTP. The interval 138–141 (NKAD) is G4. Residues 175-177 (SAL) are G5.

This sequence belongs to the TRAFAC class translation factor GTPase superfamily. Classic translation factor GTPase family. EF-Tu/EF-1A subfamily. As to quaternary structure, monomer.

The protein localises to the cytoplasm. It catalyses the reaction GTP + H2O = GDP + phosphate + H(+). Its function is as follows. GTP hydrolase that promotes the GTP-dependent binding of aminoacyl-tRNA to the A-site of ribosomes during protein biosynthesis. This chain is Elongation factor Tu, found in Mycobacterium sp. (strain JLS).